The primary structure comprises 228 residues: UPF0173 metal-dependent hydrolase lin1612 (228 aa).

Belongs to the UPF0173 family.

The polypeptide is UPF0173 metal-dependent hydrolase lin1612 (Listeria innocua serovar 6a (strain ATCC BAA-680 / CLIP 11262)).